The chain runs to 428 residues: Adenylosuccinate synthetase (428 aa).

Residues 11-17 (GDEGKGK) and 39-41 (GHT) contribute to the GTP site. The active-site Proton acceptor is the D12. Mg(2+) contacts are provided by D12 and G39. IMP contacts are provided by residues 12–15 (DEGK), 37–40 (NAGH), T130, R144, N226, T241, and R305. The active-site Proton donor is H40. Residue 301 to 307 (VTTGRKR) participates in substrate binding. GTP is bound by residues R307, 333–335 (KLD), and 415–417 (GTG).

The protein belongs to the adenylosuccinate synthetase family. In terms of assembly, homodimer. Mg(2+) is required as a cofactor.

The protein localises to the cytoplasm. The catalysed reaction is IMP + L-aspartate + GTP = N(6)-(1,2-dicarboxyethyl)-AMP + GDP + phosphate + 2 H(+). It functions in the pathway purine metabolism; AMP biosynthesis via de novo pathway; AMP from IMP: step 1/2. Functionally, plays an important role in the de novo pathway and in the salvage pathway of purine nucleotide biosynthesis. Catalyzes the first committed step in the biosynthesis of AMP from IMP. In Komagataella phaffii (strain GS115 / ATCC 20864) (Yeast), this protein is Adenylosuccinate synthetase.